Here is a 111-residue protein sequence, read N- to C-terminus: Small ribosomal subunit protein bS16 (111 aa).

Belongs to the bacterial ribosomal protein bS16 family.

In Rickettsia prowazekii (strain Madrid E), this protein is Small ribosomal subunit protein bS16.